A 345-amino-acid polypeptide reads, in one-letter code: MAKIAQNRQSVVILKSLQQLHTFGLPAHCTDFVSIKSVHSAHTFIAQHQKQPFYLLGQGSNTAFVADYKGTVAEVALKGIGVQENESHYIIKAAAGESWHELVVYCLKHTMYGFENLALIPGTVGAAPIQNIGAYGVEVERFIQSVQYIDLKTNQVHSIAAKDCEFGYRDSIFKHALWQKAMIVGVTFLLPKAWQPVVTYGELAALHAPSAQDIFNKVVEVRQAKLPDPSVLGNAGSFFKNPIISCDNLAALHQQFPSMPFYPLDTRTVKIPAAWLIDQLGFKGQFEGGIRCHPKQALVLTNAEQGTGEQLLSLARRIKNAVAEQFSIDLEHEVQLIGAKGRVLL.

The FAD-binding PCMH-type domain occupies 25 to 193 (LPAHCTDFVS…VGVTFLLPKA (169 aa)). Arg-169 is an active-site residue. The active-site Proton donor is the Ser-237. Residue Glu-333 is part of the active site.

It belongs to the MurB family. FAD is required as a cofactor.

It localises to the cytoplasm. The catalysed reaction is UDP-N-acetyl-alpha-D-muramate + NADP(+) = UDP-N-acetyl-3-O-(1-carboxyvinyl)-alpha-D-glucosamine + NADPH + H(+). It participates in cell wall biogenesis; peptidoglycan biosynthesis. In terms of biological role, cell wall formation. This Pseudoalteromonas atlantica (strain T6c / ATCC BAA-1087) protein is UDP-N-acetylenolpyruvoylglucosamine reductase.